Here is a 528-residue protein sequence, read N- to C-terminus: Lysine--tRNA ligase (528 aa).

Residues 44 to 52 carry the 'HIGH' region motif; sequence PSGLPHIGT. The 'KMSKS' region signature appears at 290 to 294; the sequence is KISKS. Residue K293 coordinates ATP.

The protein belongs to the class-I aminoacyl-tRNA synthetase family.

Its subcellular location is the cytoplasm. The enzyme catalyses tRNA(Lys) + L-lysine + ATP = L-lysyl-tRNA(Lys) + AMP + diphosphate. This chain is Lysine--tRNA ligase (lysS), found in Rickettsia prowazekii (strain Madrid E).